The chain runs to 277 residues: MQYQAPGAAPAAALGVGVPLYAPTPLLQPAHPTPFYIEDILGRGPAAAPAPHSLPAPPPPTLPSPNSSFTSLVAPYRTPVYEPTPIHPAFSHHLAATYGTGAYAGPLYSFPRAVGDYTHALIRQDPLGKPLLWSPFIQRPLHKRKGGQVRFSNEQTIELEKKFETQKYLSPPERKRLAKLLQLSERQVKTWFQNRRAKWRRLKQENPQATKKEEAEGTGDHGDPRSEGSPSPAGGGEAEPQDSPSAASQEDPESDVSDDSDQEVDIEGDKGFYSATR.

Disordered regions lie at residues 47–69 and 199–277; these read AAPA…NSSF and WRRL…SATR. The segment covering 52 to 63 has biased composition (pro residues); it reads HSLPAPPPPTLP. The segment at residues 144–203 is a DNA-binding region (homeobox); that stretch reads RKGGQVRFSNEQTIELEKKFETQKYLSPPERKRLAKLLQLSERQVKTWFQNRRAKWRRLK. A compositionally biased stretch (basic and acidic residues) spans 210 to 226; sequence TKKEEAEGTGDHGDPRS. The segment covering 250–266 has biased composition (acidic residues); that stretch reads EDPESDVSDDSDQEVDI.

In all hematopoietic tissues except peripheral blood erythrocytes and in the liver and lung.

The protein localises to the nucleus. Functionally, recognizes the DNA sequence 5'-ATTAA-3'. Transcriptional repressor. May play a role in hematopoietic differentiation. In Gallus gallus (Chicken), this protein is Hematopoietically-expressed homeobox protein HHEX (HHEX).